Reading from the N-terminus, the 163-residue chain is ATP synthase subunit b 2 (163 aa).

The chain crosses the membrane as a helical span at residues 5–25 (SLATLWATIALIIFLGVAIYI).

The protein belongs to the ATPase B chain family. In terms of assembly, F-type ATPases have 2 components, F(1) - the catalytic core - and F(0) - the membrane proton channel. F(1) has five subunits: alpha(3), beta(3), gamma(1), delta(1), epsilon(1). F(0) has three main subunits: a(1), b(2) and c(10-14). The alpha and beta chains form an alternating ring which encloses part of the gamma chain. F(1) is attached to F(0) by a central stalk formed by the gamma and epsilon chains, while a peripheral stalk is formed by the delta and b chains.

It is found in the cell inner membrane. In terms of biological role, f(1)F(0) ATP synthase produces ATP from ADP in the presence of a proton or sodium gradient. F-type ATPases consist of two structural domains, F(1) containing the extramembraneous catalytic core and F(0) containing the membrane proton channel, linked together by a central stalk and a peripheral stalk. During catalysis, ATP synthesis in the catalytic domain of F(1) is coupled via a rotary mechanism of the central stalk subunits to proton translocation. Component of the F(0) channel, it forms part of the peripheral stalk, linking F(1) to F(0). The sequence is that of ATP synthase subunit b 2 from Mesorhizobium japonicum (strain LMG 29417 / CECT 9101 / MAFF 303099) (Mesorhizobium loti (strain MAFF 303099)).